The primary structure comprises 349 residues: N-acetyltaurine hydrolase (349 aa).

Residues histidine 26, histidine 28, glutamate 169, histidine 201, histidine 230, and aspartate 298 each coordinate a divalent metal cation.

The protein belongs to the metallo-dependent hydrolases superfamily. Phosphotriesterase family. A divalent metal cation is required as a cofactor.

It localises to the cytoplasm. The protein resides in the cytosol. It catalyses the reaction N-acetyltaurine + H2O = taurine + acetate. The catalysed reaction is N-propanoyltaurine + H2O = propanoate + taurine. It carries out the reaction N-acetyl-L-methionine + H2O = L-methionine + acetate. The enzyme catalyses N-acetyl-L-isoleucine + H2O = L-isoleucine + acetate. It catalyses the reaction N-acetyl-L-leucine + H2O = L-leucine + acetate. The catalysed reaction is N-acetyl-L-valine + H2O = L-valine + acetate. Its function is as follows. N-acetyltaurine hydrolase that catalyzes the hydrolysis of N-acetyltaurine into taurine and acetate. PTER also acts on other N-acetyl amino acids (Met, Ile, Leu, Val) and N-propionyltaurine, but at lower rates. This chain is N-acetyltaurine hydrolase (pter), found in Tetraodon nigroviridis (Spotted green pufferfish).